The sequence spans 625 residues: Dopamine beta-hydroxylase (625 aa).

Topologically, residues 1–9 (MQVPSPSAR) are cytoplasmic. A helical; Signal-anchor for type II membrane protein membrane pass occupies residues 10 to 30 (EAASMYGTAVAVFLVLLVAVL). The Intragranular portion of the chain corresponds to 31–625 (QGLAPPESPL…TVVNIGGGKV (595 aa)). Positions 50 to 166 (GDLELSWDVS…GTVHLVYGVL (117 aa)) constitute a DOMON domain. 6 disulfides stabilise this stretch: Cys-147-Cys-604, Cys-224-Cys-275, Cys-261-Cys-287, Cys-382-Cys-495, Cys-386-Cys-573, and Cys-458-Cys-480. An N-linked (GlcNAc...) asparagine glycan is attached at Asn-177. Tyr-222 is an active-site residue. Cu(2+) is bound by residues His-254 and His-255. Asn-315 carries N-linked (GlcNAc...) asparagine glycosylation. Cu(2+) is bound by residues His-325, His-404, His-406, and Met-479. His-404 is a catalytic residue. N-linked (GlcNAc...) asparagine glycosylation is present at Asn-574.

This sequence belongs to the copper type II ascorbate-dependent monooxygenase family. Homotetramer; composed of two disulfide-linked dimers. Cu(2+) is required as a cofactor. In terms of processing, proteolytic cleavage after the membrane-anchor leads to the release of the soluble form. N-glycosylated.

The protein localises to the cytoplasmic vesicle. It localises to the secretory vesicle lumen. The protein resides in the secretory vesicle. It is found in the chromaffin granule lumen. Its subcellular location is the secreted. The protein localises to the secretory vesicle membrane. It localises to the chromaffin granule membrane. It catalyses the reaction dopamine + 2 L-ascorbate + O2 = (R)-noradrenaline + 2 monodehydro-L-ascorbate radical + H2O. It functions in the pathway catecholamine biosynthesis; (R)-noradrenaline biosynthesis; (R)-noradrenaline from dopamine: step 1/1. Its function is as follows. Catalyzes the hydroxylation of dopamine to noradrenaline (also known as norepinephrine), and is thus vital for regulation of these neurotransmitters. The protein is Dopamine beta-hydroxylase (DBH) of Canis lupus familiaris (Dog).